The sequence spans 239 residues: Sugar fermentation stimulation protein homolog (239 aa).

This sequence belongs to the SfsA family.

The polypeptide is Sugar fermentation stimulation protein homolog (Desulforamulus reducens (strain ATCC BAA-1160 / DSM 100696 / MI-1) (Desulfotomaculum reducens)).